The following is a 257-amino-acid chain: Zinc transporter ZupT (257 aa).

8 helical membrane passes run 5 to 25, 32 to 52, 61 to 81, 109 to 129, 137 to 157, 171 to 191, 195 to 215, and 236 to 256; these read LILT…GVLG, LLAF…LMEM, GMSP…YFGL, AILL…ATFV, LGFG…LAVA, ILWA…AWLI, MISP…MVAL, and GVLC…TAGI. Positions 120 and 123 each coordinate Fe(2+). Positions 123 and 148 each coordinate Zn(2+). Fe(2+) is bound by residues N149, E152, and E181. E152 lines the Zn(2+) pocket.

Belongs to the ZIP transporter (TC 2.A.5) family. ZupT subfamily.

The protein localises to the cell inner membrane. It catalyses the reaction Zn(2+)(in) = Zn(2+)(out). Mediates zinc uptake. May also transport other divalent cations. This chain is Zinc transporter ZupT, found in Shigella flexneri serotype 5b (strain 8401).